The following is a 706-amino-acid chain: Dihydroxyacetone synthase (706 aa).

Thiamine diphosphate-binding positions include His76 and 126-128; that span reads GPL. Mg(2+) is bound by residues Asp167, Asn197, and Val199. Asn197 is a binding site for thiamine diphosphate. Positions 273, 431, and 459 each coordinate thiamine diphosphate. Catalysis depends on Glu431, which acts as the Proton donor. The Microbody targeting signal signature appears at 704–706; it reads NHL.

The protein belongs to the transketolase family. The cofactor is Mg(2+). Ca(2+) is required as a cofactor. Requires Mn(2+) as cofactor. It depends on Co(2+) as a cofactor. Thiamine diphosphate serves as cofactor.

The protein localises to the peroxisome. It carries out the reaction D-xylulose 5-phosphate + formaldehyde = dihydroxyacetone + D-glyceraldehyde 3-phosphate. Functionally, involved in assimilation of formaldehyde. The polypeptide is Dihydroxyacetone synthase (DAS1) (Candida boidinii (Yeast)).